The sequence spans 299 residues: Telomere repeat-binding factor 2 (299 aa).

The HTH myb-type domain maps to 1-61 (MGAPKQKWTP…KWRNISVTAL (61 aa)). A DNA-binding region (H-T-H motif) is located at residues 28-57 (WRTILSDTEFSLILKSRSNVDLKDKWRNIS). A disordered region spans residues 93–116 (LTNDDERAKPTSPGGSGGGSPRTC). Residues 121–189 (SITSLDKIIF…KIKHKYRFSS (69 aa)) enclose the H15 domain. Residues 243 to 288 (EAAEAAARAVAEAEFAITEAEQAAKEAERAEAEAEAAQIFAKAAMK) adopt a coiled-coil conformation.

This sequence belongs to the histone H1/H5 family. SMH subfamily. Forms a homodimer and heterodimers with TRB1 or TRB3. Interacts with TRB1 and TRB3. Ubiquitous.

The protein localises to the nucleus. The protein resides in the nucleolus. It localises to the chromosome. Binds preferentially double-stranded telomeric repeats, but it can also bind to the single G-rich telomeric strand. The sequence is that of Telomere repeat-binding factor 2 (TRB2) from Arabidopsis thaliana (Mouse-ear cress).